Reading from the N-terminus, the 338-residue chain is UPF0194 membrane protein in asrC 5'region (338 aa).

An N-terminal signal peptide occupies residues 1-23; it reads MAISPKKRALALVVVLIVAGAVA. A coiled-coil region spans residues 148-207; the sequence is KQSLDNAAAALKTARANLDRAQQALTLAIKGPRKEDIAAARQQLQADKAGLSLARRELTD.

Belongs to the UPF0194 family.

The protein resides in the periplasm. The protein is UPF0194 membrane protein in asrC 5'region of Acidithiobacillus ferridurans.